The chain runs to 138 residues: Endoribonuclease YbeY (138 aa).

Zn(2+) contacts are provided by His-98, His-102, and His-108.

The protein belongs to the endoribonuclease YbeY family. It depends on Zn(2+) as a cofactor.

Its subcellular location is the cytoplasm. Functionally, single strand-specific metallo-endoribonuclease involved in late-stage 70S ribosome quality control and in maturation of the 3' terminus of the 16S rRNA. The chain is Endoribonuclease YbeY from Thermosipho melanesiensis (strain DSM 12029 / CIP 104789 / BI429).